The sequence spans 133 residues: ATP synthase epsilon chain, chloroplastic (133 aa).

This sequence belongs to the ATPase epsilon chain family. F-type ATPases have 2 components, CF(1) - the catalytic core - and CF(0) - the membrane proton channel. CF(1) has five subunits: alpha(3), beta(3), gamma(1), delta(1), epsilon(1). CF(0) has three main subunits: a, b and c.

It is found in the plastid. The protein resides in the chloroplast thylakoid membrane. Functionally, produces ATP from ADP in the presence of a proton gradient across the membrane. The polypeptide is ATP synthase epsilon chain, chloroplastic (Atropa belladonna (Belladonna)).